The sequence spans 565 residues: Membrane protein insertase YidC (565 aa).

Helical transmembrane passes span 6–26 (VLLI…WGKN), 348–368 (LMAL…SLLH), 370–390 (WGWA…PLSA), 437–457 (GGCF…WVLV), 479–499 (PYFI…KLTP), and 516–536 (PLIF…YWVI).

Belongs to the OXA1/ALB3/YidC family. Type 1 subfamily. Interacts with the Sec translocase complex via SecD. Specifically interacts with transmembrane segments of nascent integral membrane proteins during membrane integration.

It is found in the cell inner membrane. Its function is as follows. Required for the insertion and/or proper folding and/or complex formation of integral membrane proteins into the membrane. Involved in integration of membrane proteins that insert both dependently and independently of the Sec translocase complex, as well as at least some lipoproteins. Aids folding of multispanning membrane proteins. This is Membrane protein insertase YidC from Xylella fastidiosa (strain 9a5c).